Consider the following 130-residue polypeptide: Protein ApaG (130 aa).

The 125-residue stretch at 3 to 127 (RAVTRHIEVT…FSLDSPDGKR (125 aa)) folds into the ApaG domain.

In Bradyrhizobium sp. (strain ORS 278), this protein is Protein ApaG.